Reading from the N-terminus, the 501-residue chain is Glycerol kinase (501 aa).

ADP is bound at residue Thr14. Thr14, Thr15, and Ser16 together coordinate ATP. Thr14 provides a ligand contact to sn-glycerol 3-phosphate. Arg18 is an ADP binding site. Arg84, Glu85, Tyr135, and Asp244 together coordinate sn-glycerol 3-phosphate. Glycerol-binding residues include Arg84, Glu85, Tyr135, Asp244, and Gln245. ADP contacts are provided by Thr266 and Gly309. 4 residues coordinate ATP: Thr266, Gly309, Gln313, and Gly410. ADP contacts are provided by Gly410 and Asn414.

It belongs to the FGGY kinase family.

The enzyme catalyses glycerol + ATP = sn-glycerol 3-phosphate + ADP + H(+). It functions in the pathway polyol metabolism; glycerol degradation via glycerol kinase pathway; sn-glycerol 3-phosphate from glycerol: step 1/1. With respect to regulation, inhibited by fructose 1,6-bisphosphate (FBP). In terms of biological role, key enzyme in the regulation of glycerol uptake and metabolism. Catalyzes the phosphorylation of glycerol to yield sn-glycerol 3-phosphate. This Deinococcus radiodurans (strain ATCC 13939 / DSM 20539 / JCM 16871 / CCUG 27074 / LMG 4051 / NBRC 15346 / NCIMB 9279 / VKM B-1422 / R1) protein is Glycerol kinase.